The sequence spans 487 residues: FAD-dependent oxidoreductase domain-containing protein 1 (487 aa).

The chain crosses the membrane as a helical span at residues 62 to 82; sequence EQADVVIIGGGILGLSVAFWL.

In terms of assembly, associates with components of the mitochondrial respiratory chain complex I. FAD is required as a cofactor.

Its subcellular location is the mitochondrion inner membrane. Functionally, required for the assembly of the mitochondrial membrane respiratory chain NADH dehydrogenase (Complex I). Involved in mid-late stages of complex I assembly. This is FAD-dependent oxidoreductase domain-containing protein 1 (Foxred1) from Mus musculus (Mouse).